Here is a 651-residue protein sequence, read N- to C-terminus: Mitochondrial sodium/calcium exchanger protein (651 aa).

A helical membrane pass occupies residues 51–71; that stretch reads VILIILGILYLIILFVIMSSI. Topologically, residues 72–91 are cytoplasmic; that stretch reads ADDFFCPAISGIVSHLRMSE. The helical transmembrane segment at 92 to 112 threads the bilayer; sequence SIAGVTFLAFGNGAPDVFSSI. The Extracellular portion of the chain corresponds to 113–126; the sequence is SSVLTTPKPKADLA. A helical membrane pass occupies residues 127 to 147; it reads LGDLFGTSIFVTTVVLAIIIF. Residues 148–161 lie on the Cytoplasmic side of the membrane; that stretch reads TKSFKVAIIPTLRD. Residues 162 to 182 form a helical membrane-spanning segment; the sequence is LIFYMTTLAFIVFCFLKFDKI. Glu-183 is a topological domain (extracellular). A helical transmembrane segment spans residues 184–204; that stretch reads VWMPATFLGIYGVYVVTVIIL. Residues 205-398 lie on the Cytoplasmic side of the membrane; that stretch reads GIYRTHRKKR…PSRDEFSEMN (194 aa). The chain crosses the membrane as a helical span at residues 399 to 419; sequence IFIKIVTVIKVVPVFFFKLTV. Residues 420-428 lie on the Extracellular side of the membrane; it reads PSNEMSWCK. The helical transmembrane segment at 429-449 threads the bilayer; sequence PLFILHCFASIQFALFSIQII. Residues 450-458 lie on the Cytoplasmic side of the membrane; sequence TLKPFDGSP. The helical transmembrane segment at 459–479 threads the bilayer; that stretch reads GLWLYGLGFSAILAMVAMYFL. Residues 480 to 486 lie on the Extracellular side of the membrane; sequence PLSKEQK. Residues 487–507 traverse the membrane as a helical segment; that stretch reads YYKEIYSYLGFLMSIAWIYAT. Residues 508 to 510 lie on the Cytoplasmic side of the membrane; sequence SNE. The chain crosses the membrane as a helical span at residues 511–531; it reads IVSVVTMIGVVTGLSMELLGL. Over 532–559 the chain is Extracellular; the sequence is TIMAWSNCIGDIVADIAVVKQGYPKMAM. A helical membrane pass occupies residues 560 to 580; sequence AAAIGGPLFNLLIGFGLPFTI. The Cytoplasmic portion of the chain corresponds to 581–595; it reads AAAQGKEMELLINPV. Residues 596–616 form a helical membrane-spanning segment; that stretch reads YRLLMLFLGISLVTTFVALFI. Topologically, residues 617 to 626 are extracellular; that stretch reads QRFTVRRPHA. The chain crosses the membrane as a helical span at residues 627–647; sequence VLLIFIFVVFLIFICLAEFHV. Residues 648–651 are Cytoplasmic-facing; sequence LEWN.

It belongs to the Ca(2+):cation antiporter (CaCA) (TC 2.A.19) family. SLC24A subfamily. In terms of tissue distribution, expressed in the seam cells of the organism. Expression is visible in the seam cells across all larval stages, and expression persists into the adult stage of the organism.

The protein localises to the mitochondrion inner membrane. With respect to regulation, inhibited by the sodium/calcium exchanger inhibitor CGP-37157. Mitochondrial sodium/calcium antiporter that mediates sodium-dependent calcium efflux from mitochondrion, thereby acting as a key regulator of mitochondrion calcium homeostasis. Required for patterning of neural circuits: functions in the same pathway as RAC-dependent effectors of the unc-6/netrin signaling pathway to set left/ right patterning of the VD/DD GABAergic circuit. The polypeptide is Mitochondrial sodium/calcium exchanger protein (Caenorhabditis elegans).